A 327-amino-acid polypeptide reads, in one-letter code: Ribosomal RNA small subunit methyltransferase H (327 aa).

S-adenosyl-L-methionine contacts are provided by residues 36–38, Asp-61, Phe-88, Asp-114, and Gln-121; that span reads GGH.

Belongs to the methyltransferase superfamily. RsmH family.

It is found in the cytoplasm. It carries out the reaction cytidine(1402) in 16S rRNA + S-adenosyl-L-methionine = N(4)-methylcytidine(1402) in 16S rRNA + S-adenosyl-L-homocysteine + H(+). Functionally, specifically methylates the N4 position of cytidine in position 1402 (C1402) of 16S rRNA. The chain is Ribosomal RNA small subunit methyltransferase H from Chlorobium phaeovibrioides (strain DSM 265 / 1930) (Prosthecochloris vibrioformis (strain DSM 265)).